Consider the following 682-residue polypeptide: MKLFLNSNLLRNSIFFKISAFVLISVACFFLGKHWSEDGFRRLIFFSAEPSRSPIVALSPDFGKTYNISGLIYESHPILPPSLSPPPPPDSVELKVFGIVNENGTMSDEFQIGDYDVESAETLGNQTEFESSDDDDIKSTTARVSVRKFEICSENMTEYIPCLDNVEAIKRLNSTARGERFERNCPNDGMGLNCTVPIPQGYRSPIPWPRSRDEVWFNNVPHTKLVEDKGGQNWIYKENDKFKFPGGGTQFIHGADQYLDQISQMIPDISFGNHTRVVLDIGCGVASFGAYLMSRNVLTMSIAPKDVHENQIQFALERGVPAMVAAFTTRRLLYPSQAFDLVHCSRCRINWTRDDGILLLEVNRMLRAGGYFVWAAQPVYKHEKALEEQWEEMLNLTTRLCWVLVKKEGYIAIWQKPVNNTCYLSRGAGVSPPLCNSEDDPDNVWYVDLKACITRIEENGYGANLAPWPARLLTPPDRLQTIQIDSYIARKELFVAESKYWKEIISNYVNALHWKQIGLRNVLDMRAGFGGFAAALAELKVDCWVLNVIPVSGPNTLPVIYDRGLLGVMHDWCEPFDTYPRTYDLLHAAGLFSIERKRCNMTTMMLEMDRILRPGGRVYIRDTINVTSELQEIGNAMRWHTSLRETAEGPHSSYRVLLCEKRFESSEKRRTKKRRKTKGKRA.

The Cytoplasmic portion of the chain corresponds to 1–11 (MKLFLNSNLLR). A helical; Signal-anchor for type II membrane protein membrane pass occupies residues 12 to 32 (NSIFFKISAFVLISVACFFLG). The Lumenal segment spans residues 33–682 (KHWSEDGFRR…KRRKTKGKRA (650 aa)). N-linked (GlcNAc...) asparagine glycans are attached at residues N67, N103, N125, N155, N173, N193, N273, N350, N395, N419, N600, and N625.

Belongs to the methyltransferase superfamily.

Its subcellular location is the golgi apparatus membrane. The protein is Probable methyltransferase PMT12 of Arabidopsis thaliana (Mouse-ear cress).